Consider the following 459-residue polypeptide: Transcriptional coactivator YAP1 (459 aa).

4 positions are modified to phosphoserine; by LATS1 and LATS2: Ser21, Ser69, Ser87, and Ser119. 2 disordered regions span residues 51 to 88 (LPDS…AHSS) and 103 to 129 (SGMA…VPLP). WW domains are found at residues 126–159 (VPLP…DPRK) and 186–219 (GPLP…DPRL). Disordered stretches follow at residues 231–254 (TQSA…MGGN) and 307–364 (PTSM…SSYS). The tract at residues 247-459 (HGGVMGGNNQ…IDKESFLTWL (213 aa)) is transactivation domain. Composition is skewed to polar residues over residues 307-347 (PTSM…SGTY) and 355-364 (DSGLSMSSYS).

This sequence belongs to the YAP1 family. Phosphorylated by lats1 and lats2; leading to cytoplasmic translocation and inactivation. Ubiquitously expressed throughout development.

It is found in the cytoplasm. The protein localises to the nucleus. The protein resides in the cell junction. It localises to the tight junction. Its subcellular location is the cell membrane. Functionally, transcriptional regulator which can act both as a coactivator and a corepressor and is the critical downstream regulatory target in the Hippo signaling pathway that plays a pivotal role in organ size control and tumor suppression by restricting proliferation and promoting apoptosis. Plays a key role in tissue tension and 3D tissue shape by regulating cortical actomyosin network formation. In Oryzias latipes (Japanese rice fish), this protein is Transcriptional coactivator YAP1.